The chain runs to 155 residues: DNA gyrase inhibitor (155 aa).

It belongs to the DNA gyrase inhibitor family. In terms of assembly, interacts with DNA gyrase.

It localises to the cytoplasm. Its function is as follows. Inhibits the supercoiling activity of DNA gyrase. Acts by inhibiting DNA gyrase at an early step, prior to (or at the step of) binding of DNA by the gyrase. It protects cells against toxins that target DNA gyrase, by inhibiting activity of these toxins and reducing the formation of lethal double-strand breaks in the cell. This Salmonella typhi protein is DNA gyrase inhibitor.